The sequence spans 365 residues: MQVKEQLRGLPPYQPGKSIEEVKQEYGLSEIIKLASNENPYGSSPTVKSAIAAELDRLAVYPDGYARALREKVANHLGVKETQLLFGNGSDEVVQIFCRAFLEPGTNTVMATPTFPQYRHNAIIERAEVREVPLVDGRHDLEAMLKEIDENTRIVWVCNPNNPTGTYVNETELRAFLDRVPSHVLVVLDEAYYEYVTADDYPQTVPLLQEYEQLVIMRTFSKAYGLAALRVGYGIASESLIRAVEPAREPFNTSTIAQAAAAVALDDQAFIRACVEQNRAELERYYRFCEEHGLKYYPSQTNFLFIDFGMDGNEVFQYLLERGIIVRSGKALGLPTGVRITVGTKEQNDRVFETISHMLREKQLT.

An N6-(pyridoxal phosphate)lysine modification is found at Lys222.

Belongs to the class-II pyridoxal-phosphate-dependent aminotransferase family. Histidinol-phosphate aminotransferase subfamily. In terms of assembly, homodimer. Pyridoxal 5'-phosphate serves as cofactor.

The enzyme catalyses L-histidinol phosphate + 2-oxoglutarate = 3-(imidazol-4-yl)-2-oxopropyl phosphate + L-glutamate. The protein operates within amino-acid biosynthesis; L-histidine biosynthesis; L-histidine from 5-phospho-alpha-D-ribose 1-diphosphate: step 7/9. This is Histidinol-phosphate aminotransferase from Geobacillus thermodenitrificans (strain NG80-2).